The sequence spans 393 residues: uncharacterized protein (393 aa).

The 59-residue stretch at 12 to 70 folds into the TRAM domain; the sequence is APLLGSKIKLNIEKLAIGGAGVARHEGMVVFVPQAAPNEEILAEITLVKKNFMEARVVE. The [4Fe-4S] cluster site is built by C83, C89, C92, and C166. The S-adenosyl-L-methionine site is built by Q221, Y250, E273, and D316. C343 (nucleophile) is an active-site residue.

This sequence belongs to the class I-like SAM-binding methyltransferase superfamily. RNA M5U methyltransferase family.

This is an uncharacterized protein from Bdellovibrio bacteriovorus (strain ATCC 15356 / DSM 50701 / NCIMB 9529 / HD100).